The primary structure comprises 200 residues: MSRLLRLSLSSRVWLAAQEATRNVSEDPVVCRTPWDGSPTCTAVRVVRAEVLADGTMDLDIVFPEAAVQAVFSRTPWQDSTTATSAEEPSASTDSISSDPLPISCVESFEDMDLRCYEQLSPSPESIETIEVFPPCSTCGGHEVNGFCSLCYLRGLTDLLPQADDAGEAEVPDESAKDLCFMDLLTWAMEDKTECSRHDE.

The segment at 78-98 is disordered; that stretch reads QDSTTATSAEEPSASTDSISS. An LXCXE motif, interaction with host RB1 motif is present at residues 114–118; sequence LRCYE. A zinc finger lies at 136–151; that stretch reads CSTCGGHEVNGFCSLC. Positions 196 to 200 match the Nuclear localization signal motif; the sequence is SRHDE.

In terms of assembly, interaction with host RB1 induces the aberrant dissociation of RB1-E2F1 complex thereby disrupting RB1's activity.

E1A protein has both transforming and trans-activating activities. Plays a role in viral genome replication by driving entry of quiescent cells into the cell cycle. Disrupts the function of host retinoblastoma protein RB1/pRb and isoform early E1A 26 kDa protein stabilizes TP53, which are key regulators of the cell cycle. Induces the disassembly of the E2F1 transcription factors from RB1 by direct competition for the same binding site on RB1, with subsequent transcriptional activation of E2F1-regulated S-phase genes. Inactivation of the ability of RB1 to arrest the cell cycle is critical for cellular transformation, uncontrolled cellular growth and proliferation induced by viral infection. Stimulation of progression from G1 to S phase allows the virus to efficiently use the cellular DNA replicating machinery to achieve viral genome replication. The chain is Early E1A 21 kDa protein from Murine adenovirus A serotype 1 (MAdV-1).